The sequence spans 414 residues: MSELIIKGQNAKNASYDLGIASTKQKDDALMIMAEELIKAKGDIISANKIDLDAAVLKGTSKAMLDRLALTDERIESMAAGLKDVIKLQDPIGEVISMWQRPNGLQIGQKRVPLGVIGIIYEARPNVTCDAAGLCIKTGNAVILRGGSEAINSNKAIVKALTKGIERSGLPKASVQLVEDTSREVATEMMRLNEFIDVLIPRGGAGLIQAVLKNATVPVIETGTGNCHIYVDKDCDFEMAKNIVINAKASRPSVCNAAEKLLINEKIVEDFLPIVVKALRENGVAVKGDEVSQSIINDIEKAAEEDWGKEYLDYIIAVKVVKDVDEAISHINKYGTGHSEAIITESYKNSQKFLQRVDAAAVYVNASTRFTDGSEFGFGAEIGISTQKLHARGPMGLKELTTIKYIIYGNGQIR.

It belongs to the gamma-glutamyl phosphate reductase family.

The protein localises to the cytoplasm. The catalysed reaction is L-glutamate 5-semialdehyde + phosphate + NADP(+) = L-glutamyl 5-phosphate + NADPH + H(+). The protein operates within amino-acid biosynthesis; L-proline biosynthesis; L-glutamate 5-semialdehyde from L-glutamate: step 2/2. Catalyzes the NADPH-dependent reduction of L-glutamate 5-phosphate into L-glutamate 5-semialdehyde and phosphate. The product spontaneously undergoes cyclization to form 1-pyrroline-5-carboxylate. The chain is Gamma-glutamyl phosphate reductase from Clostridium beijerinckii (strain ATCC 51743 / NCIMB 8052) (Clostridium acetobutylicum).